The following is a 478-amino-acid chain: Multidrug resistance outer membrane protein MdtQ (478 aa).

Residues 1–21 (MNRDSFYPAIACFPLLLMLAG) form the signal peptide. C22 carries N-palmitoyl cysteine lipidation. C22 is lipidated: S-diacylglycerol cysteine.

It belongs to the outer membrane factor (OMF) (TC 1.B.17) family.

The protein resides in the cell outer membrane. Could be involved in resistance to puromycin, acriflavine and tetraphenylarsonium chloride. This chain is Multidrug resistance outer membrane protein MdtQ (mdtQ), found in Escherichia coli O157:H7.